Consider the following 512-residue polypeptide: Catalase (512 aa).

Active-site residues include His-60 and Asn-133. A heme-binding site is contributed by Tyr-344. Phosphoserine is present on Ser-363. A compositionally biased stretch (basic and acidic residues) spans 488–505 (EVKKMEEKAPKPINKGEP). A disordered region spans residues 488-512 (EVKKMEEKAPKPINKGEPHMFQGSS).

This sequence belongs to the catalase family. Heme serves as cofactor.

The protein localises to the peroxisome matrix. The enzyme catalyses 2 H2O2 = O2 + 2 H2O. Functionally, catalyzes the degradation of hydrogen peroxide (H(2)O(2)) generated by peroxisomal oxidases to water and oxygen, thereby protecting cells from the toxic effects of hydrogen peroxide. In Schizosaccharomyces pombe (strain 972 / ATCC 24843) (Fission yeast), this protein is Catalase (cta1).